Consider the following 197-residue polypeptide: MYEYIKGKYIDMYKDYIVIENNNIGYKIYTSGSTMAKLPSIGENIMLYTEQIVREDFIGVYGFLTKDELSMFKLLLTINGVGAKAALSLLSISNVSTLKYAIKMGDEKTITRAPGIGKKTAQRIILELKDKIEIDILEEDDEQIINKVADDKKVLEAVAALVTLGYSEKEANKVINSCDKNNSLEQIIKEALKYLMK.

Positions Met1 to Leu64 are domain I. Residues Thr65–Ile144 form a domain II region. The interval Ile145–Ala149 is flexible linker. Residues Ala149 to Lys197 form a domain III region.

It belongs to the RuvA family. Homotetramer. Forms an RuvA(8)-RuvB(12)-Holliday junction (HJ) complex. HJ DNA is sandwiched between 2 RuvA tetramers; dsDNA enters through RuvA and exits via RuvB. An RuvB hexamer assembles on each DNA strand where it exits the tetramer. Each RuvB hexamer is contacted by two RuvA subunits (via domain III) on 2 adjacent RuvB subunits; this complex drives branch migration. In the full resolvosome a probable DNA-RuvA(4)-RuvB(12)-RuvC(2) complex forms which resolves the HJ.

Its subcellular location is the cytoplasm. Its function is as follows. The RuvA-RuvB-RuvC complex processes Holliday junction (HJ) DNA during genetic recombination and DNA repair, while the RuvA-RuvB complex plays an important role in the rescue of blocked DNA replication forks via replication fork reversal (RFR). RuvA specifically binds to HJ cruciform DNA, conferring on it an open structure. The RuvB hexamer acts as an ATP-dependent pump, pulling dsDNA into and through the RuvAB complex. HJ branch migration allows RuvC to scan DNA until it finds its consensus sequence, where it cleaves and resolves the cruciform DNA. This chain is Holliday junction branch migration complex subunit RuvA, found in Clostridium botulinum (strain ATCC 19397 / Type A).